Here is a 141-residue protein sequence, read N- to C-terminus: Large ribosomal subunit protein uL11 (141 aa).

This sequence belongs to the universal ribosomal protein uL11 family. In terms of assembly, part of the ribosomal stalk of the 50S ribosomal subunit. Interacts with L10 and the large rRNA to form the base of the stalk. L10 forms an elongated spine to which L12 dimers bind in a sequential fashion forming a multimeric L10(L12)X complex. Post-translationally, one or more lysine residues are methylated.

Its function is as follows. Forms part of the ribosomal stalk which helps the ribosome interact with GTP-bound translation factors. This chain is Large ribosomal subunit protein uL11, found in Prochlorococcus marinus (strain MIT 9515).